A 490-amino-acid chain; its full sequence is Aspartyl/glutamyl-tRNA(Asn/Gln) amidotransferase subunit B (490 aa).

It belongs to the GatB/GatE family. GatB subfamily. As to quaternary structure, heterotrimer of A, B and C subunits.

It carries out the reaction L-glutamyl-tRNA(Gln) + L-glutamine + ATP + H2O = L-glutaminyl-tRNA(Gln) + L-glutamate + ADP + phosphate + H(+). The enzyme catalyses L-aspartyl-tRNA(Asn) + L-glutamine + ATP + H2O = L-asparaginyl-tRNA(Asn) + L-glutamate + ADP + phosphate + 2 H(+). In terms of biological role, allows the formation of correctly charged Asn-tRNA(Asn) or Gln-tRNA(Gln) through the transamidation of misacylated Asp-tRNA(Asn) or Glu-tRNA(Gln) in organisms which lack either or both of asparaginyl-tRNA or glutaminyl-tRNA synthetases. The reaction takes place in the presence of glutamine and ATP through an activated phospho-Asp-tRNA(Asn) or phospho-Glu-tRNA(Gln). This chain is Aspartyl/glutamyl-tRNA(Asn/Gln) amidotransferase subunit B, found in Burkholderia thailandensis (strain ATCC 700388 / DSM 13276 / CCUG 48851 / CIP 106301 / E264).